The primary structure comprises 430 residues: Potassium channel subfamily K member 12 (430 aa).

Topologically, residues 1–38 (MSSRSPRPPPRRSRRRLPRPSCCCCCCRRSHLNEDTGR) are cytoplasmic. The tract at residues 11–16 (RRSRRR) is ER retention/retrieval signal. Residues 39–59 (FVLLAALIGLYLVAGATVFSA) traverse the membrane as a helical segment. Asparagine 78 carries N-linked (GlcNAc...) asparagine glycosylation. An intramembrane region (pore-forming) is located at residues 114-134 (WDFPGAFYFVGTVVSTIGFGM). K(+) contacts are provided by threonine 129, isoleucine 130, and glycine 131. The interval 129–134 (TIGFGM) is selectivity filter 1. The helical transmembrane segment at 145–165 (FLIAYGLFGCAGTILFFNLFL) threads the bilayer. Over 166–212 (ERIISLLAFIMRACRERQLRRSGLLPATFRRGSALSEADSLAGWKPS) the chain is Cytoplasmic. Residues 213–233 (VYHVLLILGLFAVLLSCCASA) form a helical membrane-spanning segment. An intramembrane region (pore-forming) is located at residues 243 to 263 (YVDSLYFCFVTFSTIGFGDLV). K(+) contacts are provided by threonine 256, isoleucine 257, glycine 258, and phenylalanine 259. The tract at residues 256–261 (TIGFGD) is selectivity filter 2. Residues 282-302 (LFILLGVCCIYSLFNVISILI) traverse the membrane as a helical segment. The Cytoplasmic segment spans residues 303–430 (KQVLNWMLRK…NRLAETSASR (128 aa)).

Belongs to the two pore domain potassium channel (TC 1.A.1.8) family. Homodimer. Heterodimer with KCNK13.

The protein localises to the cell membrane. Its subcellular location is the endoplasmic reticulum membrane. The catalysed reaction is K(+)(in) = K(+)(out). Its function is as follows. K(+) channel subunit that may homo- and heterodimerize to form functional channels with distinct regulatory and gating properties. Can heterodimerize with KCNK13 subunit to conduct K(+) outward rectifying currents at the plasma membrane. The homodimers are mainly retained in the endoplasmic reticulum compartment and may be targeted to the cell surface upon phosphorylation or other activation signals yet to be elucidated. This chain is Potassium channel subfamily K member 12, found in Homo sapiens (Human).